The sequence spans 1684 residues: GRIP and coiled-coil domain-containing protein 2 (1684 aa).

Methionine 1 carries the N-acetylmethionine modification. The disordered stretch occupies residues 1-22 (MEDLVQDGVASPATPGTGKSKL). Serine 11 is subject to Phosphoserine. Phosphothreonine is present on threonine 14. Residues 110–1618 (VTKMGDAHKE…REKSAANLEY (1509 aa)) adopt a coiled-coil conformation. Serine 236, serine 1483, and serine 1487 each carry phosphoserine. A disordered region spans residues 1475–1502 (LKNEPTTRSPVSSQQSLKNLRERRNTDL). Residues 1477–1492 (NEPTTRSPVSSQQSLK) are compositionally biased toward polar residues. A mediates interaction with RAB6A region spans residues 1574–1613 (HLNGLLRETEATNAILMEQIKLLKSEIRRLERNQEREKSA). Residues 1574–1684 (HLNGLLRETE…SYLHSWSGLR (111 aa)) are mediates interaction with RAB9A. The GRIP domain occupies 1609–1659 (REKSAANLEYLKNVLLQFIFLKPGSERERLLPVINTMLQLSPEEKGKLAAV).

As to quaternary structure, homodimer. Interacts (via GRIP domain) with RAB6A (preferentially in its GTP-bound form). May interact (RAB6A-dependent) with ARL1; according to PubMed:19703403, RAB6A and ARL1 are not involved in GCC2 Golgi localization as proposed by PubMed:18243103. Interacts (probably via GRIP domain) with RAB9A (preferentially in its GTP-bound form). Interacts with CLASP1 and CLASP2; recruits both proteins to membranes of the TGN. Interacts with STX16. In terms of tissue distribution, ubiquitous.

Its subcellular location is the cytoplasm. It is found in the golgi apparatus. It localises to the trans-Golgi network membrane. Golgin which probably tethers transport vesicles to the trans-Golgi network (TGN) and regulates vesicular transport between the endosomes and the Golgi. As a RAB9A effector it is involved in recycling of the mannose 6-phosphate receptor from the late endosomes to the TGN. May also play a role in transport between the recycling endosomes and the Golgi. Required for maintenance of the Golgi structure, it is involved in the biogenesis of noncentrosomal, Golgi-associated microtubules through recruitment of CLASP1 and CLASP2. The protein is GRIP and coiled-coil domain-containing protein 2 (GCC2) of Homo sapiens (Human).